The chain runs to 182 residues: Large ribosomal subunit protein uL5 (182 aa).

The protein belongs to the universal ribosomal protein uL5 family. As to quaternary structure, part of the 50S ribosomal subunit; part of the 5S rRNA/L5/L18/L25 subcomplex. Contacts the 5S rRNA and the P site tRNA. Forms a bridge to the 30S subunit in the 70S ribosome.

This is one of the proteins that bind and probably mediate the attachment of the 5S RNA into the large ribosomal subunit, where it forms part of the central protuberance. In the 70S ribosome it contacts protein S13 of the 30S subunit (bridge B1b), connecting the 2 subunits; this bridge is implicated in subunit movement. Contacts the P site tRNA; the 5S rRNA and some of its associated proteins might help stabilize positioning of ribosome-bound tRNAs. The sequence is that of Large ribosomal subunit protein uL5 from Thermus thermophilus (strain ATCC BAA-163 / DSM 7039 / HB27).